The primary structure comprises 245 residues: Uridylate kinase (245 aa).

12 to 15 (KISG) is an ATP binding site. Glycine 55 provides a ligand contact to UMP. Residues glycine 56 and arginine 60 each coordinate ATP. UMP is bound by residues aspartate 76 and 137-144 (AGAPYLTT). The ATP site is built by threonine 164, tyrosine 171, and aspartate 174.

It belongs to the UMP kinase family. As to quaternary structure, homohexamer.

It is found in the cytoplasm. The catalysed reaction is UMP + ATP = UDP + ADP. It functions in the pathway pyrimidine metabolism; CTP biosynthesis via de novo pathway; UDP from UMP (UMPK route): step 1/1. Its activity is regulated as follows. Inhibited by UTP. In terms of biological role, catalyzes the reversible phosphorylation of UMP to UDP. The polypeptide is Uridylate kinase (Chlamydia trachomatis serovar D (strain ATCC VR-885 / DSM 19411 / UW-3/Cx)).